We begin with the raw amino-acid sequence, 103 residues long: MATAKPKKKNPRLASGRKRVRQDTKLNAANTSLRSKYRTAVKNVEKAVAAGDKDKAKDLFAKAQSIVDIVADKGIFHKNKAARDKSRLSAKVKALALAPAKAA.

Positions 1 to 20 (MATAKPKKKNPRLASGRKRV) are enriched in basic residues. The disordered stretch occupies residues 1–31 (MATAKPKKKNPRLASGRKRVRQDTKLNAANT).

This sequence belongs to the bacterial ribosomal protein bS20 family.

Functionally, binds directly to 16S ribosomal RNA. The protein is Small ribosomal subunit protein bS20 of Polaromonas sp. (strain JS666 / ATCC BAA-500).